Reading from the N-terminus, the 331-residue chain is Beta-ketoacyl-[acyl-carrier-protein] synthase III (331 aa).

Residues cysteine 116 and histidine 256 contribute to the active site. The tract at residues 257 to 261 (QANTR) is ACP-binding. Asparagine 286 is an active-site residue.

Belongs to the thiolase-like superfamily. FabH family. In terms of assembly, homodimer.

It is found in the cytoplasm. The catalysed reaction is malonyl-[ACP] + acetyl-CoA + H(+) = 3-oxobutanoyl-[ACP] + CO2 + CoA. It functions in the pathway lipid metabolism; fatty acid biosynthesis. Its function is as follows. Catalyzes the condensation reaction of fatty acid synthesis by the addition to an acyl acceptor of two carbons from malonyl-ACP. Catalyzes the first condensation reaction which initiates fatty acid synthesis and may therefore play a role in governing the total rate of fatty acid production. Possesses both acetoacetyl-ACP synthase and acetyl transacylase activities. Its substrate specificity determines the biosynthesis of branched-chain and/or straight-chain of fatty acids. The sequence is that of Beta-ketoacyl-[acyl-carrier-protein] synthase III from Caldanaerobacter subterraneus subsp. tengcongensis (strain DSM 15242 / JCM 11007 / NBRC 100824 / MB4) (Thermoanaerobacter tengcongensis).